A 152-amino-acid chain; its full sequence is Large ribosomal subunit protein bL9 (152 aa).

Belongs to the bacterial ribosomal protein bL9 family.

Functionally, binds to the 23S rRNA. The sequence is that of Large ribosomal subunit protein bL9 from Synechococcus sp. (strain RCC307).